The sequence spans 512 residues: Glutathione-binding protein GsiB (512 aa).

The N-terminal stretch at 1–26 (MTQFITHKWLAALGLASSIAAFPALA) is a signal peptide.

Belongs to the bacterial solute-binding protein 5 family. In terms of assembly, the complex is composed of two ATP-binding proteins (GsiA), two transmembrane proteins (GsiC and GsiD) and a solute-binding protein (GsiB).

It is found in the periplasm. Part of the ABC transporter complex GsiABCD involved in glutathione import. Binds glutathione. This is Glutathione-binding protein GsiB from Salmonella paratyphi A (strain ATCC 9150 / SARB42).